Here is a 130-residue protein sequence, read N- to C-terminus: Astrocytic phosphoprotein PEA-15 (130 aa).

A DED domain is found at 3–81; it reads EYGTLLQDLT…RPDLLTMVVD (79 aa). Phosphoserine is present on residues Ser61, Ser90, Ser104, and Ser116. Residues 98–107 are microtubule-binding; the sequence is KLTRIPSAKK. The microtubule-binding stretch occupies residues 122–129; the sequence is KLAPPPKK.

Binds RPS6KA3, MAPK3 and MAPK1. Transient interaction with PLD1 and PLD2. Interacts with CASP8 and FADD. Post-translationally, phosphorylated by protein kinase C and calcium-calmodulin-dependent protein kinase. These phosphorylation events are modulated by neurotransmitters or hormones. Ubiquitously expressed. Most abundant in tissues such as heart, brain, muscle and adipose tissue which utilize glucose as an energy source. Lower expression in glucose-producing tissues. Higher levels of expression are found in tissues from individuals with type 2 diabetes than in controls.

The protein resides in the cytoplasm. Its function is as follows. Blocks Ras-mediated inhibition of integrin activation and modulates the ERK MAP kinase cascade. Inhibits RPS6KA3 activities by retaining it in the cytoplasm. Inhibits both TNFRSF6- and TNFRSF1A-mediated CASP8 activity and apoptosis. Regulates glucose transport by controlling both the content of SLC2A1 glucose transporters on the plasma membrane and the insulin-dependent trafficking of SLC2A4 from the cell interior to the surface. This Homo sapiens (Human) protein is Astrocytic phosphoprotein PEA-15 (PEA15).